Here is a 537-residue protein sequence, read N- to C-terminus: Apolipoprotein N-acyltransferase (537 aa).

6 helical membrane-spanning segments follow: residues 10 to 30, 37 to 57, 76 to 96, 107 to 127, 181 to 201, and 210 to 230; these read IALAIILTWGWKRALVAITAG, LAPFNLFPVLFITFPVLVWLI, YWFGLGYFVPGLYWIGYAFFV, FAVLGLPAYLSIFTAIGFALA, IGLWGMTFLTVAIFASPATLI, and AWRAPAAAVALLIAMSIFGAI. The 254-residue stretch at 248 to 501 folds into the CN hydrolase domain; the sequence is MQPNLQQDAK…EGILDASLPA (254 aa). Glutamate 295 (proton acceptor) is an active-site residue. Lysine 360 is a catalytic residue. Catalysis depends on cysteine 413, which acts as the Nucleophile. The chain crosses the membrane as a helical span at residues 507 to 527; the sequence is IYARVGDVPAAVLVALAVLLA.

It belongs to the CN hydrolase family. Apolipoprotein N-acyltransferase subfamily.

The protein localises to the cell inner membrane. The enzyme catalyses N-terminal S-1,2-diacyl-sn-glyceryl-L-cysteinyl-[lipoprotein] + a glycerophospholipid = N-acyl-S-1,2-diacyl-sn-glyceryl-L-cysteinyl-[lipoprotein] + a 2-acyl-sn-glycero-3-phospholipid + H(+). The protein operates within protein modification; lipoprotein biosynthesis (N-acyl transfer). In terms of biological role, catalyzes the phospholipid dependent N-acylation of the N-terminal cysteine of apolipoprotein, the last step in lipoprotein maturation. The sequence is that of Apolipoprotein N-acyltransferase from Bradyrhizobium diazoefficiens (strain JCM 10833 / BCRC 13528 / IAM 13628 / NBRC 14792 / USDA 110).